The primary structure comprises 130 residues: 3-aminoacrylate deaminase RutC (130 aa).

It belongs to the RutC family.

The catalysed reaction is (Z)-3-aminoacrylate + H2O + H(+) = 3-oxopropanoate + NH4(+). In terms of biological role, involved in pyrimidine catabolism. Catalyzes the deamination of 3-aminoacrylate to malonic semialdehyde, a reaction that can also occur spontaneously. RutC may facilitate the reaction and modulate the metabolic fitness, rather than catalyzing essential functions. This is 3-aminoacrylate deaminase RutC from Methylorubrum extorquens (strain CM4 / NCIMB 13688) (Methylobacterium extorquens).